Reading from the N-terminus, the 323-residue chain is Beta-ketoacyl-[acyl-carrier-protein] synthase III (323 aa).

Active-site residues include Cys-113 and His-250. Residues 251-255 (QANKR) are ACP-binding. The active site involves Asn-280.

This sequence belongs to the thiolase-like superfamily. FabH family. In terms of assembly, homodimer.

The protein resides in the cytoplasm. The enzyme catalyses malonyl-[ACP] + acetyl-CoA + H(+) = 3-oxobutanoyl-[ACP] + CO2 + CoA. Its pathway is lipid metabolism; fatty acid biosynthesis. In terms of biological role, catalyzes the condensation reaction of fatty acid synthesis by the addition to an acyl acceptor of two carbons from malonyl-ACP. Catalyzes the first condensation reaction which initiates fatty acid synthesis and may therefore play a role in governing the total rate of fatty acid production. Possesses both acetoacetyl-ACP synthase and acetyl transacylase activities. Its substrate specificity determines the biosynthesis of branched-chain and/or straight-chain of fatty acids. This chain is Beta-ketoacyl-[acyl-carrier-protein] synthase III, found in Brucella anthropi (strain ATCC 49188 / DSM 6882 / CCUG 24695 / JCM 21032 / LMG 3331 / NBRC 15819 / NCTC 12168 / Alc 37) (Ochrobactrum anthropi).